The primary structure comprises 336 residues: MVADEEAQLHAQAWDHALSYIKPTALSAAVELEIPDILENHGGPMTLSELSAASGCPREPLYRLMRFLIFHGIFTKSDDCYAQSPLSRLFTTENLGPYMLMQATPVTRCPTGLSGEALKTGTSLYLKSIRGEDSWSDPAYGYHMKAFTNAMTAHARLTAAAIVRNYPAAFDGVQSVVDVGSRHGTAIGKLVEAFPWVRGIAFDLPEIVADAPPRKGVDFVGGDMFESVPKADAVMLMWILHDWSDDKCIEILKKCKEAIPANIGKVMIVDAIINEDGEGDEFSGTRLSLDMIMLAVMAQGKERTYKEWVHLLNEAGFSKHTIKNIKAMEFVIEAYP.

S-adenosyl-L-methionine contacts are provided by Tyr140 and Asp203. Catalysis depends on His241, which acts as the Proton acceptor.

This sequence belongs to the class I-like SAM-binding methyltransferase superfamily. Cation-independent O-methyltransferase family. In terms of assembly, homodimer. Expressed in leaves.

It catalyses the reaction genkwanin + S-adenosyl-L-methionine = apigenin 4',7-dimethyl ether + S-adenosyl-L-homocysteine. The catalysed reaction is cirsiliol + S-adenosyl-L-methionine = eupatorin + S-adenosyl-L-homocysteine + H(+). It carries out the reaction cirsimaritin + S-adenosyl-L-methionine = salvigenin + S-adenosyl-L-homocysteine + H(+). The enzyme catalyses scutellarein 7-methyl ether + S-adenosyl-L-methionine = ladanein + S-adenosyl-L-homocysteine + H(+). It catalyses the reaction (2S)-sakuranetin + S-adenosyl-L-methionine = (2S)-naringenin 4',7-dimethyl ether + S-adenosyl-L-homocysteine + H(+). It functions in the pathway flavonoid metabolism. Its activity is regulated as follows. Substrate inhibition by genkwanin (GENK) at concentrations above 10 mM. In terms of biological role, flavonoid 4'-O-methyltransferase involved in the biosynthesis of polymethoxylated flavonoids natural products such as nevadensin and salvigenin, aroma compounds which contribute to the flavor of sweet basil, and exhibit pharmacological activities such as anti-allergic, anti-oxidant, antibacterial, anti-proliferative, and anti-inflammatory effects. Catalyzes S-adenosylmethionine-dependent regioselective 4'-O-methylation of flavonoids; active on various hydroxylated flavonoid substrates, including scutellarein-7-methyl ether (SCU7Me) and, with a lower efficiency, cirsimaritin (CIRM), sakuranetin (NAR7Me), ladanein (LAD) and genkwanin (GENK). The polypeptide is Flavonoid 4'-O-methyltransferase 5 (Ocimum basilicum (Sweet basil)).